A 688-amino-acid chain; its full sequence is MAKIRVYELAKELNISSKELITLLEEEFSVEVKNHMSAIEDEDADLIKELLSGKEKSEKTKEEDDEIETTAKNPIKESINNKKSNKRDDKNEKVNTENAEDMAIITMTSDTITVKEISDKLEKSYAEVIKELMLMGVMASVNQEINFEMAEKLAAKFDTEILKEEQDEEDDLEDILKDSEEEENLQKRSPIITVMGHVDHGKTSLLDAIRKSKVTSTEAGGITQHIGAYTVELNGESITFLDTPGHAAFTAMRARGAQVTDIVILVVAADDGIMPQTKEAISHCKAAEVPLIVAINKIDRPGANIDKVKQELTEYGLVAEDWGGDTVCVPVSAHTKEGIDELLEMILLSSEILELKANPNRKAKGTVVEAKLDKGRGPVATLLVQNGTLTVGDSIVVGSTYGRIRAMFNDKGENIQSAGPSTPVGILGLSEVPEAGDKFYQVKDEKTARGIADKRKEKIRDEYLQSTHKVSLEDLYNQIREGKVKELGLIVKADVQGSVEALKQSLEKLSTEEVKVRVIHGGVGAINETDVTLATASNGIILGFNVRPDNNAIIASERDGVDIKTYRVIYDAIEDIKSAMLGMLEPEFKEVVIGTAEVRQVYKISSVGTIAGAYVQTGKLARNAGARVIRDGIVIFESELASLKRFKDDAKEVAQGYECGLSIEKFNDIKEGDIIECFIMEEIKKKTL.

The span at 50-62 (LLSGKEKSEKTKE) shows a compositional bias: basic and acidic residues. The tract at residues 50–95 (LLSGKEKSEKTKEEDDEIETTAKNPIKESINNKKSNKRDDKNEKVN) is disordered. A compositionally biased stretch (low complexity) spans 72 to 82 (KNPIKESINNK). Over residues 86-95 (KRDDKNEKVN) the composition is skewed to basic and acidic residues. A tr-type G domain is found at 187-354 (KRSPIITVMG…MILLSSEILE (168 aa)). Residues 196–203 (GHVDHGKT) are G1. 196–203 (GHVDHGKT) contributes to the GTP binding site. The interval 221–225 (GITQH) is G2. The tract at residues 242–245 (DTPG) is G3. GTP is bound by residues 242 to 246 (DTPGH) and 296 to 299 (NKID). The segment at 296–299 (NKID) is G4. A G5 region spans residues 332 to 334 (SAH).

The protein belongs to the TRAFAC class translation factor GTPase superfamily. Classic translation factor GTPase family. IF-2 subfamily.

It is found in the cytoplasm. Its function is as follows. One of the essential components for the initiation of protein synthesis. Protects formylmethionyl-tRNA from spontaneous hydrolysis and promotes its binding to the 30S ribosomal subunits. Also involved in the hydrolysis of GTP during the formation of the 70S ribosomal complex. The protein is Translation initiation factor IF-2 of Clostridium botulinum (strain Langeland / NCTC 10281 / Type F).